Reading from the N-terminus, the 253-residue chain is Sulfoacetaldehyde reductase (253 aa).

Position 6–30 (6–30 (FITGATSGFGRAAAHRFAAAGWSLV)) interacts with NADP(+). Ser-139 is a substrate binding site. Residue Tyr-152 is the Proton acceptor of the active site.

The protein belongs to the short-chain dehydrogenases/reductases (SDR) family. As to quaternary structure, homodimer and heterotetramer.

The catalysed reaction is 2-hydroxyethane-1-sulfonate + NADP(+) = sulfoacetaldehyde + NADPH + H(+). The protein operates within organosulfur degradation. Its function is as follows. Catalyzes the formation of isethionate from 2-sulfoacetaldehyde in the deaminative pathway of taurine. The enzyme is specific for NADPH; NADH is not a substrate. Responsible for most of the activity observed in taurine-grown cells. This chain is Sulfoacetaldehyde reductase (isfD), found in Chromohalobacter salexigens (strain ATCC BAA-138 / DSM 3043 / CIP 106854 / NCIMB 13768 / 1H11).